A 230-amino-acid chain; its full sequence is ATP phosphoribosyltransferase (230 aa).

It belongs to the ATP phosphoribosyltransferase family. Short subfamily. As to quaternary structure, heteromultimer composed of HisG and HisZ subunits.

The protein resides in the cytoplasm. It catalyses the reaction 1-(5-phospho-beta-D-ribosyl)-ATP + diphosphate = 5-phospho-alpha-D-ribose 1-diphosphate + ATP. The protein operates within amino-acid biosynthesis; L-histidine biosynthesis; L-histidine from 5-phospho-alpha-D-ribose 1-diphosphate: step 1/9. Catalyzes the condensation of ATP and 5-phosphoribose 1-diphosphate to form N'-(5'-phosphoribosyl)-ATP (PR-ATP). Has a crucial role in the pathway because the rate of histidine biosynthesis seems to be controlled primarily by regulation of HisG enzymatic activity. The polypeptide is ATP phosphoribosyltransferase (hisG) (Chelativorans sp. (strain BNC1)).